Reading from the N-terminus, the 102-residue chain is Small ribosomal subunit protein uS10 (102 aa).

The protein belongs to the universal ribosomal protein uS10 family. As to quaternary structure, part of the 30S ribosomal subunit.

Functionally, involved in the binding of tRNA to the ribosomes. This is Small ribosomal subunit protein uS10 from Micrococcus luteus (strain ATCC 4698 / DSM 20030 / JCM 1464 / CCM 169 / CCUG 5858 / IAM 1056 / NBRC 3333 / NCIMB 9278 / NCTC 2665 / VKM Ac-2230) (Micrococcus lysodeikticus).